The primary structure comprises 213 residues: ATP-dependent Clp protease proteolytic subunit (213 aa).

The Nucleophile role is filled by Ser-114. His-139 is a catalytic residue.

The protein belongs to the peptidase S14 family. In terms of assembly, fourteen ClpP subunits assemble into 2 heptameric rings which stack back to back to give a disk-like structure with a central cavity, resembling the structure of eukaryotic proteasomes.

The protein resides in the cytoplasm. It carries out the reaction Hydrolysis of proteins to small peptides in the presence of ATP and magnesium. alpha-casein is the usual test substrate. In the absence of ATP, only oligopeptides shorter than five residues are hydrolyzed (such as succinyl-Leu-Tyr-|-NHMec, and Leu-Tyr-Leu-|-Tyr-Trp, in which cleavage of the -Tyr-|-Leu- and -Tyr-|-Trp bonds also occurs).. Functionally, cleaves peptides in various proteins in a process that requires ATP hydrolysis. Has a chymotrypsin-like activity. Plays a major role in the degradation of misfolded proteins. This Ectopseudomonas mendocina (strain ymp) (Pseudomonas mendocina) protein is ATP-dependent Clp protease proteolytic subunit.